We begin with the raw amino-acid sequence, 403 residues long: Tryptophan synthase beta chain (403 aa).

At K90 the chain carries N6-(pyridoxal phosphate)lysine.

It belongs to the TrpB family. Tetramer of two alpha and two beta chains. Pyridoxal 5'-phosphate serves as cofactor.

It catalyses the reaction (1S,2R)-1-C-(indol-3-yl)glycerol 3-phosphate + L-serine = D-glyceraldehyde 3-phosphate + L-tryptophan + H2O. Its pathway is amino-acid biosynthesis; L-tryptophan biosynthesis; L-tryptophan from chorismate: step 5/5. Its function is as follows. The beta subunit is responsible for the synthesis of L-tryptophan from indole and L-serine. The chain is Tryptophan synthase beta chain from Leifsonia xyli subsp. xyli (strain CTCB07).